A 373-amino-acid chain; its full sequence is Transcription factor NF-E2 45 kDa subunit (373 aa).

The segment at 1-83 (MSPCPPQQSR…SGFPLPPPPY (83 aa)) is required for interaction with MAPK8. Positions 1–206 (MSPCPPQQSR…PAAETPLALE (206 aa)) are transactivation domain. 2 short sequence motifs (PXY motif) span residues 61 to 65 (PPTTY) and 79 to 83 (PPPPY). The interval 127 to 150 (LDIGLPAGPPKPQEDPESDSGLSL) is disordered. Position 157 is a phosphoserine; by MAPK8 (Ser157). Ser170 bears the Phosphoserine; by PKA mark. The interval 205-226 (LEPSSGPVRAKPTARGEAGSRD) is disordered. Residues 266 to 329 (LVRDIRRRGK…EVMRQQLTEL (64 aa)) form the bZIP domain. The interval 268 to 287 (RDIRRRGKNKVAAQNCRKRK) is basic motif. The interval 291–298 (IVQLEREL) is leucine-zipper. Residue Lys368 forms a Glycyl lysine isopeptide (Lys-Gly) (interchain with G-Cter in SUMO1) linkage.

Belongs to the bZIP family. CNC subfamily. As to quaternary structure, homodimer; can bind DNA as a homodimer. Erythroid transcription activator nuclear factor erythroid-derived 2 (NF-E2), composed of a heterodimer of NFE2 and MAFK, possesses transactivation activity on beta-globin. Also forms high affinity heterodimer with MAFG; the interaction promotes erythropoiesis. Interacts (via the PXY motif 1) with ITCH (via the WW 1 domain); the interaction promotes 'Lys63'-linked ubiquitination of NFE2, translocates it to the cytoplasm and inhibits its transactivation activity. Interacts with KMT2D/MLL2; the interaction promotes transactivation of the beta-globin locus. Interacts with MAPK8 (phosphorylated form); the interaction leads to phosphorylation of NFE2 in undifferentiated cells. Phosphorylated on serine residues. In undifferentiated erythrocytes, phosphorylated by MAPK8 which then leads to ubiquitination and protein degradation. Post-translationally, sumoylated. Sumoylation is required for translocation to nuclear bodies PODs, anchoring to the gene loci, and transactivation of the beta-globin gene. In terms of processing, ubiquitinated mainly by 'Lys63'-linked ubiquitin. Polyubiquitination with 'Lys63'-linked ubiquitin by ITCH retains NFE2 in the cytoplasm preventing its transactivation activity. In undifferentiated erythrocyte, ubiquitinated after MAPK8-mediatd phosphorylation leading to protein degradation. In terms of tissue distribution, expressed in hematopoietic cells and also in colon and testis.

It localises to the nucleus. The protein localises to the PML body. Its subcellular location is the cytoplasm. Its function is as follows. Component of the NF-E2 complex essential for regulating erythroid and megakaryocytic maturation and differentiation. Binds to the hypersensitive site 2 (HS2) of the beta-globin control region (LCR). This subunit (NFE2) recognizes the TCAT/C sequence of the AP-1-like core palindrome present in a number of erythroid and megakaryocytic gene promoters. Requires MAFK or other small MAF proteins for binding to the NF-E2 motif. May play a role in all aspects of hemoglobin production from globin and heme synthesis to procurement of iron. This Homo sapiens (Human) protein is Transcription factor NF-E2 45 kDa subunit (NFE2).